The chain runs to 199 residues: Shikimate kinase (199 aa).

14–19 (GSGKST) is a binding site for ATP. Ser-18 lines the Mg(2+) pocket. Substrate contacts are provided by Asp-36, Arg-60, and Gly-82. Arg-120 lines the ATP pocket. Residue Arg-147 coordinates substrate.

The protein belongs to the shikimate kinase family. As to quaternary structure, monomer. The cofactor is Mg(2+).

The protein localises to the cytoplasm. It carries out the reaction shikimate + ATP = 3-phosphoshikimate + ADP + H(+). The protein operates within metabolic intermediate biosynthesis; chorismate biosynthesis; chorismate from D-erythrose 4-phosphate and phosphoenolpyruvate: step 5/7. In terms of biological role, catalyzes the specific phosphorylation of the 3-hydroxyl group of shikimic acid using ATP as a cosubstrate. The chain is Shikimate kinase from Chlorobium limicola (strain DSM 245 / NBRC 103803 / 6330).